Reading from the N-terminus, the 361-residue chain is UDP-N-acetylglucosamine--N-acetylmuramyl-(pentapeptide) pyrophosphoryl-undecaprenol N-acetylglucosamine transferase (361 aa).

Residues 13-15 (TGG), N125, R167, S196, I251, 270-275 (ALTVTE), and Q296 each bind UDP-N-acetyl-alpha-D-glucosamine.

Belongs to the glycosyltransferase 28 family. MurG subfamily.

The protein localises to the cell inner membrane. It catalyses the reaction di-trans,octa-cis-undecaprenyl diphospho-N-acetyl-alpha-D-muramoyl-L-alanyl-D-glutamyl-meso-2,6-diaminopimeloyl-D-alanyl-D-alanine + UDP-N-acetyl-alpha-D-glucosamine = di-trans,octa-cis-undecaprenyl diphospho-[N-acetyl-alpha-D-glucosaminyl-(1-&gt;4)]-N-acetyl-alpha-D-muramoyl-L-alanyl-D-glutamyl-meso-2,6-diaminopimeloyl-D-alanyl-D-alanine + UDP + H(+). It functions in the pathway cell wall biogenesis; peptidoglycan biosynthesis. In terms of biological role, cell wall formation. Catalyzes the transfer of a GlcNAc subunit on undecaprenyl-pyrophosphoryl-MurNAc-pentapeptide (lipid intermediate I) to form undecaprenyl-pyrophosphoryl-MurNAc-(pentapeptide)GlcNAc (lipid intermediate II). In Psychrobacter arcticus (strain DSM 17307 / VKM B-2377 / 273-4), this protein is UDP-N-acetylglucosamine--N-acetylmuramyl-(pentapeptide) pyrophosphoryl-undecaprenol N-acetylglucosamine transferase.